A 574-amino-acid polypeptide reads, in one-letter code: Probable glucomannan 4-beta-mannosyltransferase 6 (574 aa).

Residues 87–107 form a helical membrane-spanning segment; it reads VVACMVMSVIVLAEKVFLGVV. The active site involves Asp180. The substrate site is built by Asp239 and Asp241. Asp333 is an active-site residue. 4 consecutive transmembrane segments (helical) span residues 412 to 432, 437 to 457, 523 to 543, and 548 to 568; these read IIST…KVFF, IPLW…SVGT, FHCL…YDYL, and IFYI…FEFM.

It belongs to the glycosyltransferase 2 family. Plant cellulose synthase-like A subfamily.

Its subcellular location is the golgi apparatus membrane. The catalysed reaction is GDP-mannose + (glucomannan)n = GDP + (glucomannan)n+1.. Functionally, probable mannan synthase which consists of a 4-beta-mannosyltransferase activity on mannan using GDP-mannose. The beta-1,4-mannan product is the backbone for galactomannan synthesis by galactomannan galactosyltransferase. Galactomannan is a noncellulosic polysaccharides of plant cell wall. The chain is Probable glucomannan 4-beta-mannosyltransferase 6 from Oryza sativa subsp. japonica (Rice).